The sequence spans 554 residues: CTP synthase (554 aa).

The amidoligase domain stretch occupies residues 1–279 (MTSSRKVRPT…DTFIIRRLGL (279 aa)). CTP is bound at residue serine 21. A UTP-binding site is contributed by serine 21. ATP-binding positions include 22–27 (SLGKGL) and aspartate 79. Mg(2+) contacts are provided by aspartate 79 and glutamate 153. Residues 160–162 (DIE), 200–205 (KTKPTQ), and lysine 236 each bind CTP. UTP-binding positions include 200–205 (KTKPTQ) and lysine 236. The Glutamine amidotransferase type-1 domain maps to 304-553 (TVGIVGKYID…VKTALELRVH (250 aa)). Glycine 367 serves as a coordination point for L-glutamine. Cysteine 394 functions as the Nucleophile; for glutamine hydrolysis in the catalytic mechanism. L-glutamine is bound by residues 395–398 (LGLQ), glutamate 417, and arginine 478. Residues histidine 526 and glutamate 528 contribute to the active site.

It belongs to the CTP synthase family. As to quaternary structure, homotetramer.

The catalysed reaction is UTP + L-glutamine + ATP + H2O = CTP + L-glutamate + ADP + phosphate + 2 H(+). It catalyses the reaction L-glutamine + H2O = L-glutamate + NH4(+). The enzyme catalyses UTP + NH4(+) + ATP = CTP + ADP + phosphate + 2 H(+). It functions in the pathway pyrimidine metabolism; CTP biosynthesis via de novo pathway; CTP from UDP: step 2/2. Allosterically activated by GTP, when glutamine is the substrate; GTP has no effect on the reaction when ammonia is the substrate. The allosteric effector GTP functions by stabilizing the protein conformation that binds the tetrahedral intermediate(s) formed during glutamine hydrolysis. Inhibited by the product CTP, via allosteric rather than competitive inhibition. Catalyzes the ATP-dependent amination of UTP to CTP with either L-glutamine or ammonia as the source of nitrogen. Regulates intracellular CTP levels through interactions with the four ribonucleotide triphosphates. This chain is CTP synthase, found in Corynebacterium glutamicum (strain R).